Here is a 237-residue protein sequence, read N- to C-terminus: Golgi to ER traffic protein 1 (237 aa).

Residues 1–4 (MDSG) are Lumenal-facing. The helical transmembrane segment at 5–24 (GWIVYCCIFFILLGKVLEYT) threads the bilayer. Over 25 to 110 (SSYQDKWFTK…SSKKVFGRVK (86 aa)) the chain is Cytoplasmic. The stretch at 40–99 (EARKLNSQYHELLSERLRLQEENHSISAQDNYARWTKNNRKLGELDKKLGTIRDKLQETN) forms a coiled coil. Residues 111–131 (LIGLTIPFWILKIWQRSHVVY) traverse the membrane as a helical segment. Over 132–176 (HFPKQDLFPKLVTGVWARGWLYLALGPLQYLRNGSLNIQDYAPHG) the chain is Lumenal. The helical transmembrane segment at 177–193 (VSLGIWIWALQATINTL) threads the bilayer. The Cytoplasmic segment spans residues 194 to 237 (EFLVKQVILEKPVSPPPQKSKSATKAETKRPEKLEITDDKVELD). The interval 205–237 (PVSPPPQKSKSATKAETKRPEKLEITDDKVELD) is disordered. Over residues 217-237 (TKAETKRPEKLEITDDKVELD) the composition is skewed to basic and acidic residues.

The protein belongs to the WRB/GET1 family. As to quaternary structure, component of the Golgi to ER traffic (GET) complex, which is composed of GET1, GET2 and GET3. Within the complex, GET1 and GET2 form a heterotetramer which is stabilized by phosphatidylinositol binding and which binds to the GET3 homodimer.

It is found in the endoplasmic reticulum membrane. Its subcellular location is the golgi apparatus membrane. Its function is as follows. Required for the post-translational delivery of tail-anchored (TA) proteins to the endoplasmic reticulum. Together with GET2, acts as a membrane receptor for soluble GET3, which recognizes and selectively binds the transmembrane domain of TA proteins in the cytosol. The GET complex cooperates with the HDEL receptor ERD2 to mediate the ATP-dependent retrieval of resident ER proteins that contain a C-terminal H-D-E-L retention signal from the Golgi to the ER. The chain is Golgi to ER traffic protein 1 from Zygosaccharomyces rouxii (strain ATCC 2623 / CBS 732 / NBRC 1130 / NCYC 568 / NRRL Y-229).